Reading from the N-terminus, the 189-residue chain is dCTP deaminase (189 aa).

Residues 112–117 (KSTYAR), 136–138 (TLE), glutamine 157, tyrosine 171, and glutamine 181 each bind dCTP. Glutamate 138 serves as the catalytic Proton donor/acceptor.

This sequence belongs to the dCTP deaminase family. In terms of assembly, homotrimer.

The enzyme catalyses dCTP + H2O + H(+) = dUTP + NH4(+). The protein operates within pyrimidine metabolism; dUMP biosynthesis; dUMP from dCTP (dUTP route): step 1/2. Its function is as follows. Catalyzes the deamination of dCTP to dUTP. The sequence is that of dCTP deaminase from Acinetobacter baumannii (strain SDF).